The primary structure comprises 923 residues: Cell cycle and apoptosis regulator protein 2 (923 aa).

Positions 1 to 35 (MSQFKRQRINPLPGGRNFSGTASTSLLGPPPGLLT) are disordered. Thr35 is modified (phosphothreonine). An N6-acetyllysine; by KAT8 modification is found at Lys112. Residue Lys123 is modified to N6-methyllysine. Residue Ser124 is modified to Phosphoserine. Disordered regions lie at residues 178 to 218 (LNRF…KKPR), 446 to 510 (KAAE…PAVI), and 568 to 643 (VSPP…SEDL). Omega-N-methylarginine is present on Arg180. A compositionally biased stretch (basic and acidic residues) spans 188–200 (GRLDQGRSDDYDS). Lys215 is modified (N6-acetyllysine; by KAT8). Residues 446-458 (KAAEAAPPTQEAQ) are compositionally biased toward low complexity. A Phosphothreonine; by ATM, ATR and CK2 modification is found at Thr454. Thr484 is modified (phosphothreonine). Ser569 is modified (phosphoserine). Positions 572–602 (EPEKEEAAKEEATKEEEAIKEEVVKEPKDEA) are enriched in basic and acidic residues. Lys591 is covalently cross-linked (Glycyl lysine isopeptide (Lys-Gly) (interchain with G-Cter in SUMO2 and SUMO3); alternate). Lys591 is covalently cross-linked (Glycyl lysine isopeptide (Lys-Gly) (interchain with G-Cter in SUMO2); alternate). Residues 610 to 670 (ESEAPLKEDG…EEFAGAKLED (61 aa)) are interaction with MCC. 6 positions are modified to phosphoserine: Ser627, Ser675, Ser678, Ser681, Ser687, and Ser808. Positions 704–923 (DCLLAFVFFD…VEKEEPAPSN (220 aa)) are interaction with NR1D1. Residues 829–909 (LENKIHTLEL…QLEIQRVVEK (81 aa)) are a coiled coil. Phosphothreonine is present on Thr897.

As to quaternary structure, component of the DBIRD complex. Interacts with ZNF326/ZIRD; the interaction is direct. Interacts (via N-terminus) with SIRT1, which inhibits the deacetylation of substrates. Interacts (via N-terminus) with SUV39H1; this interaction abolishes the interaction with SIRT1. Component of a nuclear receptor-mediated transcription complex composed of at least ZNF335, CCAR2 and EMSY; the complex stimulates the transcription of nuclear receptor target genes such as SOX9 and HOXA1. Within the complex interacts with EMSY and interacts with ZNF335 (via C-terminus). Components of this complex may associate with components of a histone methylation complex to form a complex at least composed of ZNF335, HCFC1, CCAR2, EMSY, MKI67, RBBP5, ASH2L and WDR5. Within this complex, interacts with ASH2L. Interacts with NR1D1. Interacts (via N-terminus) with ESR1 and ESR2. Interacts (via N-terminus) with HDAC3 (via C-terminus). Interacts with HDAC1 and MED2F. Interacts with MCC. Interacts (via N-terminus) with NR1H2 and NR1H3 in a ligand-independent manner. Interacts with CSNK2A1. Interacts (via N-terminus) with p53/TP53. Interacts (via N-terminus) with BRCA1 (via the BRCT domains). Interacts (via N-terminus) with CHEK2 (via protein kinase domain). Interacts with PSEM3. Interacts (via N-terminus) with PSIA3 and SENP1. The sumoylated form shows a preferential interaction with SIRT1 as compared to its unmodified form. Interacts with CECR2; may form part of the CERF-1 and/or CEF-5 ISWI chromatin remodeling complexes in embryonic stem cells. Post-translationally, ATM/ATR-mediated phosphorylation at Thr-454 upon DNA damage promotes binding to SIRT1. Phosphorylation at Thr-454 promotes its sumoylation by switching the binding partner of CCAR2 from SENP1 to PIAS3. Acetylation at Lys-112 and Lys-215 by KAT8 prevents inhibitory binding to SIRT1 and increases its deacetylase activity. In terms of processing, genotoxic stress induces its sumoylation and sumoylation promotes the SIRT1-CCAR2 interaction which in turn inhibits SIRT1-mediated deacetylation of p53/TP53. Sumoylation leads to transcriptional activation of p53/TP53 by sequestering SIRT1 from p53/TP53. Desumoylated by SENP1. In terms of tissue distribution, expressed in gastric carcinoma tissue and the expression gradually increases with the progression of the carcinoma (at protein level). Expressed ubiquitously in normal tissues. Expressed in 84 to 100% of neoplastic breast, lung, and colon tissues.

The protein localises to the nucleus. It localises to the cytoplasm. Its subcellular location is the cytoskeleton. It is found in the spindle. Core component of the DBIRD complex, a multiprotein complex that acts at the interface between core mRNP particles and RNA polymerase II (RNAPII) and integrates transcript elongation with the regulation of alternative splicing: the DBIRD complex affects local transcript elongation rates and alternative splicing of a large set of exons embedded in (A + T)-rich DNA regions. Inhibits SIRT1 deacetylase activity leading to increasing levels of p53/TP53 acetylation and p53-mediated apoptosis. Inhibits SUV39H1 methyltransferase activity. Mediates ligand-dependent transcriptional activation by nuclear hormone receptors. Plays a critical role in maintaining genomic stability and cellular integrity following UV-induced genotoxic stress. Regulates the circadian expression of the core clock components NR1D1 and BMAL1. Enhances the transcriptional repressor activity of NR1D1 through stabilization of NR1D1 protein levels by preventing its ubiquitination and subsequent degradation. Represses the ligand-dependent transcriptional activation function of ESR2. Acts as a regulator of PCK1 expression and gluconeogenesis by a mechanism that involves, at least in part, both NR1D1 and SIRT1. Negatively regulates the deacetylase activity of HDAC3 and can alter its subcellular localization. Positively regulates the beta-catenin pathway (canonical Wnt signaling pathway) and is required for MCC-mediated repression of the beta-catenin pathway. Represses ligand-dependent transcriptional activation function of NR1H2 and NR1H3 and inhibits the interaction of SIRT1 with NR1H3. Plays an important role in tumor suppression through p53/TP53 regulation; stabilizes p53/TP53 by affecting its interaction with ubiquitin ligase MDM2. Represses the transcriptional activator activity of BRCA1. Inhibits SIRT1 in a CHEK2 and PSEM3-dependent manner and inhibits the activity of CHEK2 in vitro. This Homo sapiens (Human) protein is Cell cycle and apoptosis regulator protein 2 (CCAR2).